The sequence spans 101 residues: CLAVATA3/ESR (CLE)-related protein 18 (101 aa).

An N-terminal signal peptide occupies residues methionine 1–alanine 25. The tract at residues arginine 37–histidine 58 is disordered. Residues proline 40 and proline 43 each carry the hydroxyproline modification. Residues glycine 42–serine 53 show a composition bias toward pro residues. An O-linked (Ara...) hydroxyproline glycan is attached at proline 43. Tyrosine 76 carries the post-translational modification Sulfotyrosine. Proline 84 carries the post-translational modification Hydroxyproline.

This sequence belongs to the CLV3/ESR signal peptide family. In terms of processing, the tyrosine sulfation is critical for the function of the peptide. Post-translationally, the O-glycosylation (arabinosylation) of the hydroxyproline Pro-43 enhances binding affinity of the CLE18p peptide for its receptor. As to expression, expressed in roots, leaves, siliques and seedlings.

The protein resides in the secreted. The protein localises to the extracellular space. Functionally, root growth factor that regulates the pattern of root growth and lateral root development by modulating the length and the number of cortical cells in the root apical meristem (RAM), and the anticlinal asymmetric cell divisions in lateral root initiation cells. Its function is as follows. Extracellular signal peptide that regulates cell fate. Represses root apical meristem maintenance. Root growth factor that regulates the pattern of root growth and lateral root development. Regulates the transition of protophloem cells from proliferation to differentiation, thus impinging on postembryonic growth capacity of the root meristem; this signaling pathway requires CRN and CLV2. The polypeptide is CLAVATA3/ESR (CLE)-related protein 18 (Arabidopsis thaliana (Mouse-ear cress)).